Here is an 840-residue protein sequence, read N- to C-terminus: SLIT and NTRK-like protein 6 (840 aa).

Residues methionine 1 to leucine 18 form the signal peptide. The 46-residue stretch at serine 22–phenylalanine 67 folds into the LRRNT 1 domain. The Extracellular portion of the chain corresponds to proline 23–leucine 609. 5 LRR repeats span residues asparagine 89–glycine 110, leucine 113–glycine 134, asparagine 137–lysine 158, arginine 161–phenylalanine 182, and proline 184–glutamate 205. The 52-residue stretch at asparagine 218–threonine 269 folds into the LRRCT 1 domain. The LRRNT 2 domain occupies proline 319–proline 360. 6 LRR repeats span residues asparagine 363–aspartate 384, threonine 387–asparagine 408, arginine 411–glycine 432, serine 435–proline 456, lysine 459–glycine 480, and proline 482–aspartate 503. An LRRCT 2 domain is found at asparagine 516–glycine 567. The helical transmembrane segment at isoleucine 610 to phenylalanine 630 threads the bilayer. The Cytoplasmic segment spans residues valine 631–threonine 840. A compositionally biased stretch (basic and acidic residues) spans glutamine 717–histidine 726. The interval glutamine 717–tyrosine 736 is disordered. Polar residues predominate over residues serine 727–tyrosine 736.

Belongs to the SLITRK family. In the embryo, expressed in otic cyst, lateral trunk epidermis and underlying mesodermal tissue, limb bud, maxillary process, cochlea, retina, tongue, tooth primordium, central nervous system, and primordia of visceral organs including lung, gastrointestinal tract and pancreas. In the central nervous system, expressed primarily in dorsal thalamus, cerebellum and medulla.

It is found in the cell membrane. Functionally, regulator of neurite outgrowth required for normal hearing and vision. The polypeptide is SLIT and NTRK-like protein 6 (Slitrk6) (Mus musculus (Mouse)).